The following is a 718-amino-acid chain: Fatty acid oxidation complex subunit alpha (718 aa).

The segment at 1-188 is enoyl-CoA hydratase/isomerase; it reads MIYQGESIRV…KVGAVDAVVE (188 aa). A substrate-binding site is contributed by aspartate 295. Residues 310–718 are 3-hydroxyacyl-CoA dehydrogenase; sequence TKEIKTAGVL…KSYFDTTSAK (409 aa). Residues methionine 324, aspartate 343, 400-402, lysine 407, and serine 429 contribute to the NAD(+) site; that span reads VVE. Histidine 450 functions as the For 3-hydroxyacyl-CoA dehydrogenase activity in the catalytic mechanism. Asparagine 453 contacts NAD(+). Substrate contacts are provided by asparagine 500 and tyrosine 658.

It in the N-terminal section; belongs to the enoyl-CoA hydratase/isomerase family. The protein in the C-terminal section; belongs to the 3-hydroxyacyl-CoA dehydrogenase family. In terms of assembly, heterotetramer of two alpha chains (FadB) and two beta chains (FadA).

It carries out the reaction a (3S)-3-hydroxyacyl-CoA + NAD(+) = a 3-oxoacyl-CoA + NADH + H(+). The catalysed reaction is a (3S)-3-hydroxyacyl-CoA = a (2E)-enoyl-CoA + H2O. The enzyme catalyses a 4-saturated-(3S)-3-hydroxyacyl-CoA = a (3E)-enoyl-CoA + H2O. It catalyses the reaction (3S)-3-hydroxybutanoyl-CoA = (3R)-3-hydroxybutanoyl-CoA. It carries out the reaction a (3Z)-enoyl-CoA = a 4-saturated (2E)-enoyl-CoA. The catalysed reaction is a (3E)-enoyl-CoA = a 4-saturated (2E)-enoyl-CoA. It participates in lipid metabolism; fatty acid beta-oxidation. Its function is as follows. Involved in the aerobic and anaerobic degradation of long-chain fatty acids via beta-oxidation cycle. Catalyzes the formation of 3-oxoacyl-CoA from enoyl-CoA via L-3-hydroxyacyl-CoA. It can also use D-3-hydroxyacyl-CoA and cis-3-enoyl-CoA as substrate. This chain is Fatty acid oxidation complex subunit alpha, found in Idiomarina loihiensis (strain ATCC BAA-735 / DSM 15497 / L2-TR).